A 298-amino-acid chain; its full sequence is Urease accessory protein UreD 3 (298 aa).

Residues 1 to 30 are disordered; sequence MADEAGTRSAGGRPIPAAEPLRPALSRQRS.

Belongs to the UreD family. As to quaternary structure, ureD, UreF and UreG form a complex that acts as a GTP-hydrolysis-dependent molecular chaperone, activating the urease apoprotein by helping to assemble the nickel containing metallocenter of UreC. The UreE protein probably delivers the nickel.

The protein resides in the cytoplasm. Functionally, required for maturation of urease via the functional incorporation of the urease nickel metallocenter. This Methylorubrum extorquens (strain PA1) (Methylobacterium extorquens) protein is Urease accessory protein UreD 3.